The primary structure comprises 396 residues: MRATWKGVISFGLVSIPVRLYSATQERDVAFHQVRRSDGSRIRYRRVAEADGDEVNYADIAKGYELPDGETVVLTDEDFANLPLSTSRAIDVLEFVPLEQVDPIYFAKSYYVEPDRTGAKPYVLLRDALAASGRVALVKIALRQREQLATLRVRGGVFVLETMVWPDEVRQPDFPFLEEDVAVRPQELSVAASLIHTLAADFDPTRYTDNYREALQAVIDAKVAGREVVASPGGPASEAVGDLMAALRASIAAARAGRPGEAAVAGGAAVAGGAAVADGDAGPAAAGVTDEGPDDKASDDKASDDKASDGRRGGRTSSVKGASSAPGTRSTARKTPSSTRSTAKTNAATKTPPAKTSAAKASAAKTSAAKATSSRTAPKTAPRTPTSKTPPTRRSA.

The Ku domain maps to I9 to S189. A compositionally biased stretch (low complexity) spans D278 to V288. The interval D278 to A396 is disordered. A compositionally biased stretch (basic and acidic residues) spans D294–R312. Residues R315–P336 show a composition bias toward polar residues. Over residues S337 to A396 the composition is skewed to low complexity.

Belongs to the prokaryotic Ku family. Homodimer. Interacts with LigD.

Its function is as follows. With LigD forms a non-homologous end joining (NHEJ) DNA repair enzyme, which repairs dsDNA breaks with reduced fidelity. Binds linear dsDNA with 5'- and 3'- overhangs but not closed circular dsDNA nor ssDNA. Recruits and stimulates the ligase activity of LigD. The chain is Non-homologous end joining protein Ku from Frankia casuarinae (strain DSM 45818 / CECT 9043 / HFP020203 / CcI3).